The following is a 962-amino-acid chain: Spliceosome associated factor 3, U4/U6 recycling protein (962 aa).

The segment covering 1-21 (MATTAASSASEPEVEPQAGPE) has biased composition (low complexity). The segment at 1-92 (MATTAASSAS…EDEWEYDEEE (92 aa)) is disordered. Ala-2 carries the N-acetylalanine modification. Positions 2-352 (ATTAASSASE…LVPDLWIRYS (351 aa)) are mediates interaction with PRPF3. Phosphoserine is present on Ser-10. Residues 81–92 (AGEDEWEYDEEE) show a composition bias toward acidic residues. HAT repeat units lie at residues 127-159 (GELSRVRAARQKMSELFPLTEELWLEWLHDEIS), 165-196 (LDREHVYELFERAVKDYICPNIWLEYGQYSVG), 202-238 (GGLEKVRSVFERALSSVGLHMTKGLAIWEAYREFESA), 243-276 (ARLEKVHSLFRRQLAIPLYEMEATFAEYEEWSEE), 325-357 (GDPARIQLIFERALVENCLVPDLWIRYSQYLDR), 360-392 (KVKDLVLSVHSRAVRNCPWTVALWSRYLLAMER), 395-431 (LDHQTISATFENALSAGFIQATDYVEIWQVYLDYLRR), 441-474 (KELEELRSMFTRALEYLQQEVEERFSESGDPSCL), and 488-521 (NNMQKARELWDSIMTRGNAKYANMWLEYYNLERA). Ser-216 bears the Phosphoserine mark. The required for interaction with USP4 stretch occupies residues 488 to 521 (NNMQKARELWDSIMTRGNAKYANMWLEYYNLERA). Residues 538 to 952 (CTSDYPEHVC…VATEAPKMSN (415 aa)) are necessary and sufficient for U6 snRNA binding. Positions 559–618 (TLEDWDLAIQKTETRLARVNEQRMKAAEKEAALVQQEEEKAEQRKKVRAEKKALKKKKKT) form a coiled coil. Over residues 591-602 (LVQQEEEKAEQR) the composition is skewed to basic and acidic residues. The segment at 591–696 (LVQQEEEKAE…SLKRDMPKVA (106 aa)) is disordered. Residues 601–670 (QRKKVRAEKK…KEETELSGKC (70 aa)) form a required for nuclear localization region. Residues 602-609 (RKKVRAEK) carry the Nuclear localization signal motif. Residues 603 to 618 (KKVRAEKKALKKKKKT) show a composition bias toward basic residues. Over residues 627–640 (DEDEENEWGEEEEE) the composition is skewed to acidic residues. Ser-651 is subject to Phosphoserine. The span at 680-696 (KQKEKAASLKRDMPKVA) shows a compositional bias: basic and acidic residues. An RRM 1 domain is found at 704–782 (VTVFVSNLPY…RPMFVSPCVD (79 aa)). Phosphoserine is present on residues Ser-795 and Ser-852. One can recognise an RRM 2 domain in the interval 801-878 (HKLFISGLPF…NVIKVAISNP (78 aa)). The segment at 880–962 (QRKVPEKPEV…ADFAKLLLRK (83 aa)) is disordered. Arg-906 carries the post-translational modification Omega-N-methylarginine.

In terms of assembly, component of the 7SK snRNP complex at least composed of P-TEFb (composed of CDK9 and CCNT1/cyclin-T1), HEXIM1, HEXIM2, BCDIN3, SART3 proteins and 7SK and U6 snRNAs. Interacts with AGO1 and AGO2. Interacts with PRPF3 and USP4; the interaction with PRPF3 is direct and recruits USP4 to its substrate PRPF3. Interacts with USP15; the interaction is direct. In terms of tissue distribution, ubiquitously expressed, with low level of expression in liver, heart and skeletal. Also detected in hematopoietic cells (at protein level).

It localises to the nucleus. Its subcellular location is the nucleoplasm. The protein localises to the cajal body. It is found in the nucleus speckle. The protein resides in the cytoplasm. Its function is as follows. U6 snRNP-binding protein that functions as a recycling factor of the splicing machinery. Promotes the initial reassembly of U4 and U6 snRNPs following their ejection from the spliceosome during its maturation. Also binds U6atac snRNPs and may function as a recycling factor for U4atac/U6atac spliceosomal snRNP, an initial step in the assembly of U12-type spliceosomal complex. The U12-type spliceosomal complex plays a role in the splicing of introns with non-canonical splice sites. May also function as a substrate-targeting factor for deubiquitinases like USP4 and USP15. Recruits USP4 to ubiquitinated PRPF3 within the U4/U5/U6 tri-snRNP complex, promoting PRPF3 deubiquitination and thereby regulating the spliceosome U4/U5/U6 tri-snRNP spliceosomal complex disassembly. May also recruit the deubiquitinase USP15 to histone H2B and mediate histone deubiquitination, thereby regulating gene expression and/or DNA repair. May play a role in hematopoiesis probably through transcription regulation of specific genes including MYC. The sequence is that of Spliceosome associated factor 3, U4/U6 recycling protein from Mus musculus (Mouse).